Consider the following 212-residue polypeptide: Leucine efflux protein (212 aa).

A run of 6 helical transmembrane segments spans residues 12-32 (TYLV…LFVL), 49-69 (GVFI…ATLI), 71-91 (TTPI…LYLG), 122-142 (ILSL…VQFI), 153-173 (FFIL…FLII), and 188-208 (LAKV…ARLA).

It belongs to the Rht family.

It localises to the cell inner membrane. It carries out the reaction L-leucine(in) + H(+)(out) = L-leucine(out) + H(+)(in). Leucine export is inhibited by the proton ionophore carbonyl cyanide m-chlorophenylhydrazone (CCCP). Its function is as follows. Exporter of leucine. Can also transport its natural analog L-alpha-amino-n-butyric acid and some other structurally unrelated amino acids. Leucine excretion is probably driven by proton motive force. This Escherichia coli (strain K12) protein is Leucine efflux protein.